A 344-amino-acid polypeptide reads, in one-letter code: Glyceraldehyde-3-phosphate dehydrogenase (344 aa).

Residues 11–12 and Gly-110 each bind NAD(+); that span reads TI. Residue 139-141 participates in D-glyceraldehyde 3-phosphate binding; it reads SCN. Cys-140 functions as the Nucleophile in the catalytic mechanism. Arg-169 serves as a coordination point for NAD(+). 195 to 196 serves as a coordination point for D-glyceraldehyde 3-phosphate; that stretch reads HG. Gln-302 contributes to the NAD(+) binding site.

This sequence belongs to the glyceraldehyde-3-phosphate dehydrogenase family. Homotetramer.

Its subcellular location is the cytoplasm. It carries out the reaction D-glyceraldehyde 3-phosphate + phosphate + NADP(+) = (2R)-3-phospho-glyceroyl phosphate + NADPH + H(+). The catalysed reaction is D-glyceraldehyde 3-phosphate + phosphate + NAD(+) = (2R)-3-phospho-glyceroyl phosphate + NADH + H(+). The protein operates within carbohydrate degradation; glycolysis; pyruvate from D-glyceraldehyde 3-phosphate: step 1/5. The chain is Glyceraldehyde-3-phosphate dehydrogenase from Pyrobaculum islandicum (strain DSM 4184 / JCM 9189 / GEO3).